A 168-amino-acid polypeptide reads, in one-letter code: Mitochondrial ATP-independent inner membrane protease subunit 1a (168 aa).

Residues 1–47 (MRMTFLSYLKQWRGTAKEAFENVSIVAKFLCLLHVTDRYIISTTHVH) constitute a mitochondrion transit peptide. Active-site residues include S50 and K94.

The protein belongs to the peptidase S26 family. IMP1 subfamily. Heterodimer of 2 subunits, IMP1A/B and IMP12.

Its subcellular location is the mitochondrion inner membrane. Catalyzes the removal of transit peptides required for the targeting of proteins from the mitochondrial matrix, across the inner membrane, into the inter-membrane space. The polypeptide is Mitochondrial ATP-independent inner membrane protease subunit 1a (Arabidopsis thaliana (Mouse-ear cress)).